Here is a 321-residue protein sequence, read N- to C-terminus: Protein ATP1B4 (321 aa).

Residues 1-41 (MEPGMEMNTASEGGTRRGPENKHEEKVQDPNRGEAETKAEM) are disordered. Topologically, residues 1 to 72 (MEPGMEMNTA…RTCMGRTAKS (72 aa)) are cytoplasmic. A compositionally biased stretch (basic and acidic residues) spans 14-41 (GTRRGPENKHEEKVQDPNRGEAETKAEM). The chain crosses the membrane as a helical span at residues 73–93 (WGLILLFYFIFYTCLAGMFAF). The Extracellular segment spans residues 94–321 (CMYVMLLTLS…RIIFTLSIGK (228 aa)). N132, N176, and N193 each carry an N-linked (GlcNAc...) asparagine glycan. A disulfide bridge connects residues C165 and C184. Intrachain disulfides connect C194-C210 and C233-C293. N-linked (GlcNAc...) asparagine glycosylation is found at N239, N252, and N270.

It belongs to the X(+)/potassium ATPases subunit beta family. Composed of two subunits: alpha (catalytic) and beta (accessory). Post-translationally, glycosylated. In terms of tissue distribution, expressed in skeletal muscle, intestine, heart, brain, retina, inner ear and skin.

The protein resides in the membrane. In terms of biological role, this is the non-catalytic component of the active enzyme, which catalyzes the hydrolysis of ATP coupled with the exchange of Na(+) and K(+) ions across the plasma membrane. The chain is Protein ATP1B4 (ATP1B4) from Gallus gallus (Chicken).